Consider the following 31-residue polypeptide: Phalloidin proprotein (31 aa).

The propeptide occupies 1-10; the sequence is MSDINATRLP. Residues 11–17 constitute a cross-link (cyclopeptide (Ala-Pro)); it reads AWLATCP. The 2'-cysteinyl-6'-hydroxytryptophan sulfoxide (Trp-Cys) cross-link spans 12-16; sequence WLATC. A propeptide spanning residues 18–31 is cleaved from the precursor; it reads CAGDDVNPLLTRGE.

Belongs to the MSDIN fungal toxin family. Processed by the macrocyclase-peptidase enzyme POPB to yield a toxic cyclic heptapeptide. POPB first removes 10 residues from the N-terminus. Conformational trapping of the remaining peptide forces the enzyme to release this intermediate rather than proceed to macrocyclization. The enzyme rebinds the remaining peptide in a different conformation and catalyzes macrocyclization of the N-terminal 7 residues.

Functionally, major toxin that belongs to the bicyclic heptapeptides called phallotoxins. Although structurally related to amatoxins, phallotoxins have a different mode of action, which is the stabilization of F-actin. Phallotoxins are poisonous when administered parenterally, but not orally because of poor absorption. The sequence is that of Phalloidin proprotein from Amanita ocreata (Western North American destroying angel).